Here is a 100-residue protein sequence, read N- to C-terminus: Urease subunit gamma (100 aa).

This sequence belongs to the urease gamma subunit family. In terms of assembly, heterotrimer of UreA (gamma), UreB (beta) and UreC (alpha) subunits. Three heterotrimers associate to form the active enzyme.

The protein resides in the cytoplasm. The enzyme catalyses urea + 2 H2O + H(+) = hydrogencarbonate + 2 NH4(+). The protein operates within nitrogen metabolism; urea degradation; CO(2) and NH(3) from urea (urease route): step 1/1. The chain is Urease subunit gamma from Sinorhizobium fredii (strain NBRC 101917 / NGR234).